The following is a 205-amino-acid chain: Probable anaerobic dimethyl sulfoxide reductase chain YnfG (205 aa).

4Fe-4S ferredoxin-type domains are found at residues 5–33 (YGFFIDSSRCTGCKTCELACKDFKDLGPE), 59–89 (FAYYLSISCNHCDDPACTKVCPSGAMHKRED), and 90–119 (GFVVVDEDVCIGCRYCHMACPYGAPQYNAE). Positions 14, 17, 20, 24, 67, 70, 75, 79, 99, 102, 105, 109, 126, 129, 141, and 145 each coordinate [4Fe-4S] cluster. Residues 183-205 (IKPNANSRPTGDTTGYLANPEEV) are disordered. Positions 186 to 195 (NANSRPTGDT) are enriched in polar residues.

As to quaternary structure, the complex consists of three subunits: YnfF, the reductase; YnfG, an electron transfer protein, and YnfH, a membrane anchor protein. [4Fe-4S] cluster serves as cofactor.

In terms of biological role, electron transfer subunit of the terminal reductase during anaerobic growth on various sulfoxide and N-oxide compounds. This Escherichia coli O6:H1 (strain CFT073 / ATCC 700928 / UPEC) protein is Probable anaerobic dimethyl sulfoxide reductase chain YnfG (ynfG).